We begin with the raw amino-acid sequence, 524 residues long: Calcium-dependent protein kinase 1 (524 aa).

A disordered region spans residues 1–34 (MGCSQSSNVKDFKTRRSKFTNGNNYGKSGNNKNS). Glycine 2 carries N-myristoyl glycine lipidation. A lipid anchor (S-palmitoyl cysteine) is attached at cysteine 3. The Basic cluster involved in membrane binding signature appears at 10–20 (KDFKTRRSKFT). Serine 17, serine 28, and serine 34 each carry phosphoserine; by autocatalysis. The span at 21–32 (NGNNYGKSGNNK) shows a compositional bias: low complexity. A Protein kinase domain is found at 56–325 (YFKVRKLGSG…AKEALNSKWI (270 aa)). Residues 62-70 (LGSGAYGEV) and lysine 85 contribute to the ATP site. Serine 64 carries the post-translational modification Phosphoserine; by PKG; by autocatalysis. Phosphothreonine; by autocatalysis is present on threonine 100. Serine 118 carries the post-translational modification Phosphoserine; by autocatalysis. Aspartate 191 functions as the Proton acceptor in the catalytic mechanism. The residue at position 217 (serine 217) is a Phosphoserine. Position 220 is a phosphoserine; by autocatalysis (serine 220). Phosphothreonine; by PKG; by autocatalysis is present on threonine 231. Position 335 is a phosphoserine; by autocatalysis (serine 335). The J domain autoinhibitory motif signature appears at 346–353 (NMRKFEGS). Residues 346-364 (NMRKFEGSQKLAQAAILFI) are j domain. The short motif at 354-364 (QKLAQAAILFI) is the J domain interacts with the EF-hand domains element. EF-hand domains lie at 372 to 407 (EERK…LRSF), 416 to 451 (NVEE…KQIL), 452 to 487 (FSEE…TSIS), and 488 to 521 (EQMW…ICDN). 20 residues coordinate Ca(2+): aspartate 385, asparagine 387, aspartate 389, glutamine 391, glutamate 396, aspartate 429, aspartate 431, asparagine 433, tyrosine 435, glutamate 440, aspartate 465, aspartate 467, serine 469, lysine 471, glutamate 476, aspartate 499, asparagine 501, aspartate 503, methionine 505, and glutamate 510.

It belongs to the protein kinase superfamily. Ser/Thr protein kinase family. CDPK subfamily. In terms of assembly, monomer. Forms a high molecular weight (250 and 400 kDa) complex. Forms a complex composed of CDPK1, PKA regulatory subunit PKAr and 14-3-3I; the complex is formed in merozoites in response to low extracellular level of K(+) and may play a role in microneme secretion. Interacts (when phosphorylated) with 14-3-3I in a Ca(2+)-independent manner; the interaction does not regulate CDPK1 catalytic activity but is required for merozoite invasion of host erythrocytes. Interacts with PKA regulatory subunit PKAr; in a Ca(2+)-dependent manner. Interacts with SERA5 p50 in the late schizont stage. Interacts with inner membrane complex protein IMC1g in late schizonts. Interacts with rhoptry protein RhopH3 in merozoites. The cofactor is Mg(2+). Post-translationally, myristoylated. Myristoylation, palmitoylation and the basic cluster motif are required for the localization to the parasitophorous vacuole membrane. Palmitoylated. Palmitoylation increases in merozoites in response to low level of extracellular K(+) in the host blood. Myristoylation, palmitoylation and the basic cluster motif are required for the localization to the parasitophorous vacuole membrane. In terms of processing, phosphorylation at Ser-64 occurs at late schizont stage and regulates CDPK1 protein-protein interaction. Phosphorylated at Ser-28, Ser-34 and Ser-64 in merozoites in response to low extracellular level of K(+). Phosphorylation at Thr-231 may regulate CDPK1 kinase activity. Phosphorylation increases in response to an increase in intracellular Ca(2+) levels. Autophosphorylated in vitro. Autophosphorylation does not affect membrane localization in vitro.

The protein resides in the membrane. Its subcellular location is the cell membrane. It localises to the parasitophorous vacuole membrane. It is found in the cytoplasm. The protein localises to the cell projection. The protein resides in the cilium. Its subcellular location is the flagellum. It localises to the host cell membrane. The catalysed reaction is L-seryl-[protein] + ATP = O-phospho-L-seryl-[protein] + ADP + H(+). The enzyme catalyses L-threonyl-[protein] + ATP = O-phospho-L-threonyl-[protein] + ADP + H(+). With respect to regulation, activated by calcium. Upon calcium binding to the EF-hand domains, the C-terminus of the junction domain (J domain) undergoes a conformational change which results in the dissociation of the pseudo-substrate inhibitory motif from the catalytic domain. This, in turn may facilitate the autophosphorylation of the activation loop at Thr-231, which leads to the kinase activation. May be negatively regulated by PKA-mediated phosphorylation. Inhibited by purfalcamine. In terms of biological role, calcium-dependent protein kinase which acts as a sensor and effector of intracellular Ca(2+) levels probably in part downstream of cGMP-activated PKG kinase. By phosphorylating various proteins, required for microneme secretion and thus merozoite egress from and invasion of host erythrocytes. During gametogenesis, essential for the development of both male and female gametes. Phosphorylates SERA5 p50 which enhances SERA5 p50 protease activity; however, SERA5 p50 protease activity has been shown in other studies to be controversial. Probably by phosphorylating SERA5 p50, plays a role in merozoite egress from host erythrocytes. Probably prior or during merozoite invasion of host erythrocytes, phosphorylates rhoptry protein RhopH3 which is required for RhopH3 localization to rhoptries and for its secretion. Probably in late schizonts, phosphorylates myosin A tail domain-interacting protein MTIP and glideosome-associated protein 45 GAP45, both of which are components of the motor complex that generates the force required by the parasite to invade host cells. In late schizonts, phosphorylates inner membrane complex protein IMC1g. In late schizonts, phosphorylates PKA regulatory subunit PKAr in a calcium-dependent manner, which may contribute to the dissociation of regulatory PKAr and catalytic PKAc subunits and promote the activation of PKAc. May phosphorylate raf kinase inhibitory protein RKIP which in turn may regulate CDPK1 catalytic activity. May phosphorylate proteins of the host erythrocyte membranes. The sequence is that of Calcium-dependent protein kinase 1 from Plasmodium falciparum (isolate 3D7).